The chain runs to 92 residues: UPF0235 protein PF1765 (92 aa).

It belongs to the UPF0235 family.

The sequence is that of UPF0235 protein PF1765 from Pyrococcus furiosus (strain ATCC 43587 / DSM 3638 / JCM 8422 / Vc1).